The following is a 165-amino-acid chain: Small ribosomal subunit protein uS5 (165 aa).

One can recognise an S5 DRBM domain in the interval 10-73 (LVEKLVAVDR…EAARRNMITV (64 aa)).

It belongs to the universal ribosomal protein uS5 family. In terms of assembly, part of the 30S ribosomal subunit. Contacts proteins S4 and S8.

With S4 and S12 plays an important role in translational accuracy. Functionally, located at the back of the 30S subunit body where it stabilizes the conformation of the head with respect to the body. This is Small ribosomal subunit protein uS5 from Acinetobacter baumannii (strain AB307-0294).